The following is a 45-amino-acid chain: Osteocalcin 1 (45 aa).

A Gla domain is found at 1-41; the sequence is AAGQLSLTQLESLREVCELNLACEHMMDTEGIIAAYTAYYG. Ca(2+) contacts are provided by E11, E15, E18, and E24. E11, E15, and E18 each carry 4-carboxyglutamate. Residues C17 and C23 are joined by a disulfide bond.

It belongs to the osteocalcin/matrix Gla protein family. Gamma-carboxyglutamate residues are formed by vitamin K dependent carboxylation by GGCX. These residues are essential for the binding of calcium.

The protein resides in the secreted. In terms of biological role, the carboxylated form is one of the main organic components of the bone matrix, which constitutes 1-2% of the total bone protein. The carboxylated form binds strongly to apatite and calcium. The polypeptide is Osteocalcin 1 (Diplodus sargus (White seabream)).